A 154-amino-acid chain; its full sequence is MHCPFCGANDTKVIDSRLVAEGEQVRRRRECLACGERFTTFETAELVLPRLIKTDGSRQPFDEEKLRAGMQRALEKRPVSVERLESSLVHIKHKLRATGEREVKSLVVGELVMAELQKLDEVAYIRFASVYRRFQDLNEFREEIDRLAREPVKE.

The segment at 3 to 34 (CPFCGANDTKVIDSRLVAEGEQVRRRRECLAC) is a zinc-finger region. An ATP-cone domain is found at 49–139 (PRLIKTDGSR…VYRRFQDLNE (91 aa)).

This sequence belongs to the NrdR family. Requires Zn(2+) as cofactor.

Negatively regulates transcription of bacterial ribonucleotide reductase nrd genes and operons by binding to NrdR-boxes. The polypeptide is Transcriptional repressor NrdR (Pseudomonas fluorescens (strain Pf0-1)).